Here is a 184-residue protein sequence, read N- to C-terminus: UPF0301 protein Rsph17029_2659 (184 aa).

Belongs to the UPF0301 (AlgH) family.

This chain is UPF0301 protein Rsph17029_2659, found in Cereibacter sphaeroides (strain ATCC 17029 / ATH 2.4.9) (Rhodobacter sphaeroides).